Here is a 319-residue protein sequence, read N- to C-terminus: Ribose-phosphate pyrophosphokinase (319 aa).

ATP contacts are provided by residues 40–42 and 99–100; these read DGE and RQ. Positions 134 and 174 each coordinate Mg(2+). Lysine 198 is an active-site residue. Residues arginine 200, aspartate 224, and 228–232 contribute to the D-ribose 5-phosphate site; that span reads DTAGT.

This sequence belongs to the ribose-phosphate pyrophosphokinase family. Class I subfamily. In terms of assembly, homohexamer. Mg(2+) is required as a cofactor.

It is found in the cytoplasm. The catalysed reaction is D-ribose 5-phosphate + ATP = 5-phospho-alpha-D-ribose 1-diphosphate + AMP + H(+). Its pathway is metabolic intermediate biosynthesis; 5-phospho-alpha-D-ribose 1-diphosphate biosynthesis; 5-phospho-alpha-D-ribose 1-diphosphate from D-ribose 5-phosphate (route I): step 1/1. In terms of biological role, involved in the biosynthesis of the central metabolite phospho-alpha-D-ribosyl-1-pyrophosphate (PRPP) via the transfer of pyrophosphoryl group from ATP to 1-hydroxyl of ribose-5-phosphate (Rib-5-P). This chain is Ribose-phosphate pyrophosphokinase, found in Xanthomonas axonopodis pv. citri (strain 306).